The chain runs to 424 residues: Dihydroorotase (424 aa).

Histidine 58 and histidine 60 together coordinate Zn(2+). Residues 60-62 and asparagine 92 each bind substrate; that span reads HLR. 3 residues coordinate Zn(2+): aspartate 150, histidine 177, and histidine 230. Asparagine 276 contributes to the substrate binding site. Zn(2+) is bound at residue aspartate 303. Aspartate 303 is an active-site residue. Residues histidine 307 and 321–322 contribute to the substrate site; that span reads FG.

The protein belongs to the metallo-dependent hydrolases superfamily. DHOase family. Class I DHOase subfamily. Zn(2+) is required as a cofactor.

It catalyses the reaction (S)-dihydroorotate + H2O = N-carbamoyl-L-aspartate + H(+). It functions in the pathway pyrimidine metabolism; UMP biosynthesis via de novo pathway; (S)-dihydroorotate from bicarbonate: step 3/3. Catalyzes the reversible cyclization of carbamoyl aspartate to dihydroorotate. This chain is Dihydroorotase, found in Staphylococcus aureus (strain MRSA252).